The sequence spans 254 residues: Imidazole glycerol phosphate synthase subunit HisF (254 aa).

Active-site residues include Asp13 and Asp132.

This sequence belongs to the HisA/HisF family. As to quaternary structure, heterodimer of HisH and HisF.

The protein resides in the cytoplasm. The enzyme catalyses 5-[(5-phospho-1-deoxy-D-ribulos-1-ylimino)methylamino]-1-(5-phospho-beta-D-ribosyl)imidazole-4-carboxamide + L-glutamine = D-erythro-1-(imidazol-4-yl)glycerol 3-phosphate + 5-amino-1-(5-phospho-beta-D-ribosyl)imidazole-4-carboxamide + L-glutamate + H(+). The protein operates within amino-acid biosynthesis; L-histidine biosynthesis; L-histidine from 5-phospho-alpha-D-ribose 1-diphosphate: step 5/9. Its function is as follows. IGPS catalyzes the conversion of PRFAR and glutamine to IGP, AICAR and glutamate. The HisF subunit catalyzes the cyclization activity that produces IGP and AICAR from PRFAR using the ammonia provided by the HisH subunit. This Sulfurovum sp. (strain NBC37-1) protein is Imidazole glycerol phosphate synthase subunit HisF.